The sequence spans 440 residues: Oligodendrocyte-myelin glycoprotein (440 aa).

Positions 1–24 (MEYQILKMSLCLFILLFLTPGILC) are cleaved as a signal peptide. Positions 25-55 (ICPLQCICTERHRHVDCSGRNLSTLPSGLQE) constitute an LRRNT domain. N-linked (GlcNAc...) asparagine glycosylation is found at Asn-45 and Asn-61. 8 LRR repeats span residues 56-77 (NIIH…LTQY), 79-100 (NLRT…LPRS), 101-121 (LWNM…DTAY), 124-145 (NLKY…KNTL), 147-168 (SLEV…MPSK), 169-189 (LHIV…TLIN), 192-213 (NLTH…SFDQ), and 216-239 (QLQE…TYLL). Asn-103 carries N-linked (GlcNAc...) asparagine glycosylation. Asn-152, Asn-176, Asn-189, Asn-192, and Asn-234 each carry an N-linked (GlcNAc...) asparagine glycan. Ser/Thr-rich repeat units lie at residues 229-270 (CDHK…YPTP), 271-292 (SGFT…INSL), 293-335 (SVVT…VPYP), 336-377 (EDTS…SPTP), and 378-416 (MTLS…TPLP). Asn-364 and Asn-389 each carry an N-linked (GlcNAc...) asparagine glycan. Ser-417 carries the GPI-anchor amidated serine lipid modification. A propeptide spans 418–440 (VANAWKVNASFLLLLNVVVMLAV) (removed in mature form). N-linked (GlcNAc...) asparagine glycosylation is present at Asn-425.

In terms of assembly, binds to RTN4R. In terms of processing, O-glycosylated in its Ser/Thr-rich repeat domain. Oligodendrocytes and myelin of the central nervous system.

Its subcellular location is the cell membrane. In terms of biological role, cell adhesion molecule contributing to the interactive process required for myelination in the central nervous system. The sequence is that of Oligodendrocyte-myelin glycoprotein (OMG) from Homo sapiens (Human).